A 159-amino-acid chain; its full sequence is Ribosomal RNA large subunit methyltransferase H (159 aa).

Residues L76, G108, and 127 to 132 each bind S-adenosyl-L-methionine; that span reads FGLLTL.

This sequence belongs to the RNA methyltransferase RlmH family. In terms of assembly, homodimer.

It localises to the cytoplasm. It carries out the reaction pseudouridine(1915) in 23S rRNA + S-adenosyl-L-methionine = N(3)-methylpseudouridine(1915) in 23S rRNA + S-adenosyl-L-homocysteine + H(+). Specifically methylates the pseudouridine at position 1915 (m3Psi1915) in 23S rRNA. The sequence is that of Ribosomal RNA large subunit methyltransferase H from Streptococcus mutans serotype c (strain ATCC 700610 / UA159).